The primary structure comprises 434 residues: Putative G3BP-like protein (434 aa).

One can recognise an NTF2 domain in the interval 18–134 (IGWMFVQEYY…YFVLNDIFRF (117 aa)). Disordered stretches follow at residues 141–180 (EEEE…EGHY) and 274–308 (VKSQ…PYTQ). Serine 145 bears the Phosphoserine mark. Residues 148–157 (AVEKEKKDVA) are compositionally biased toward basic and acidic residues. Low complexity predominate over residues 276-291 (SQASVSSTASTTGQTV). Polar residues predominate over residues 296-308 (ADQTQQPTAPYTQ). Positions 315 to 386 (TSVFVKNIPP…ATLNIEERRR (72 aa)) constitute an RRM domain. Residues 390–434 (GKFNKSGDKKSNDNYNGMKRNFRKGNRGAFDGRSKEVTTSKKQNN) are disordered. Basic and acidic residues predominate over residues 419–428 (FDGRSKEVTT).

Probable scaffold protein that may be involved in mRNA transport. The chain is Putative G3BP-like protein (nxt3) from Schizosaccharomyces pombe (strain 972 / ATCC 24843) (Fission yeast).